Consider the following 78-residue polypeptide: MSRVCQVTGKRPMVGNNRSHAKNATRRRFLPNLQNHRFWLENEKRFVQLRISTKGMRIIDKKGIEVVIAELRARGEKV.

A disordered region spans residues 1-21 (MSRVCQVTGKRPMVGNNRSHA).

It belongs to the bacterial ribosomal protein bL28 family.

The sequence is that of Large ribosomal subunit protein bL28 from Shewanella halifaxensis (strain HAW-EB4).